The sequence spans 457 residues: Cysteine desulfurase (457 aa).

The pyridoxal 5'-phosphate site is built by alanine 127, threonine 128, glutamine 235, serine 255, and histidine 257. Lysine 258 is modified (N6-(pyridoxal phosphate)lysine). Residue threonine 295 participates in pyridoxal 5'-phosphate binding. Cysteine 381 functions as the Cysteine persulfide intermediate in the catalytic mechanism. Residue cysteine 381 participates in [2Fe-2S] cluster binding. Residue cysteine 381 participates in Zn(2+) binding. Residue cysteine 381 is modified to Cysteine persulfide.

The protein belongs to the class-V pyridoxal-phosphate-dependent aminotransferase family. NifS/IscS subfamily. Homodimer. Component of the mitochondrial core iron-sulfur cluster (ISC) complex composed of NFS1, LYRM4, NDUFAB1, ISCU, FXN, and FDX2; this complex is a heterohexamer containing two copies of each monomer. Component of cyteine desulfurase complex composed of NFS1, LYRM4 and NDUFAB1; this complex contributes to the activation of cysteine desulfurase activity and NFS1 stabilization. Interacts (homodimer form) with ISCU (D-state); each monomer interacts with the C-terminal regions of each NFS1 monomer. Interacts with HSPA9. Interacts (via homodimer form) with FDX2. Interacts (via homodimer form) with FXN. Interacts with LYRM4. Component of a complex composed of FXN, NFS1, LYRM4 and ISCU. In terms of assembly, monomer. Homodimer. Oligomer. Interacts with ISCU. Component of the cysteine desulfurase complex composed of NFS1 and LYRM4; this complex contributes to the activation of cysteine desulfurase activity. Interacts with MOCS3. Pyridoxal 5'-phosphate serves as cofactor. In terms of processing, N-gluconoylated. Post-translationally, cysteine persulfide intermediate is reduced by thiol-containing molecules like glutathione and L-cysteine. Persulfide reduction is a rate-limiting step of cysteine desulfurase catalytic cycle. As to expression, predominantly expressed in heart and skeletal muscle. Also found in brain, liver and pancreas.

Its subcellular location is the mitochondrion. The protein localises to the cytoplasm. It localises to the nucleus. The protein resides in the cytoskeleton. It is found in the microtubule organizing center. Its subcellular location is the centrosome. The catalysed reaction is (sulfur carrier)-H + L-cysteine = (sulfur carrier)-SH + L-alanine. It catalyses the reaction L-cysteinyl-[cysteine desulfurase] + L-cysteine = S-sulfanyl-L-cysteinyl-[cysteine desulfurase] + L-alanine. Active only in complex with LYRM4. Cysteine desulfurase, of the core iron-sulfur cluster (ISC) assembly complex, that catalyzes the desulfuration of L-cysteine to L-alanine, as component of the cysteine desulfurase complex, leading to the formation of a cysteine persulfide intermediate at the active site cysteine residue and participates in the [2Fe-2S] clusters assembly on the scaffolding protein ISCU. The persulfide is then transferred on the flexible Cys loop from the catalytic site of NFS1 to the surface of NFS1. After the NFS1-linked persulfide sulfur is transferred to one of the conserved Cys residues of the scaffold, a reaction assisted by FXN. The core iron-sulfur cluster (ISC) assembly complex is involved in the de novo synthesis of a [2Fe-2S] cluster, the first step of the mitochondrial iron-sulfur protein biogenesis. This process is initiated by the cysteine desulfurase complex (NFS1:LYRM4:NDUFAB1) that produces persulfide which is delivered on the scaffold protein ISCU in a FXN-dependent manner. Then this complex is stabilized by FDX2 which provides reducing equivalents to accomplish the [2Fe-2S] cluster assembly. Finally, the [2Fe-2S] cluster is transferred from ISCU to chaperone proteins, including HSCB, HSPA9 and GLRX5. In terms of biological role, may catalyze the desulfuration of L-cysteine to L-alanine as component of the cysteine desulfurase complex (NFS1:LYRM4), leading to the formation of a cysteine persulfide intermediate. Acts as a sulfur donor for MOCS3 by transferring the sulfur of the cysteine persulfide intermediate on MOCS3. The polypeptide is Cysteine desulfurase (Homo sapiens (Human)).